A 347-amino-acid chain; its full sequence is Indole-3-glycerol phosphate lyase, chloroplastic (347 aa).

Disordered regions lie at residues 1-38 (MAFAPKTSSSSSLSSALQAAQSPPLLLRRMSSTATPRR) and 64-89 (APPQAPAPAPVPPKQAAAPAERRSRP). The N-terminal 53 residues, 1–53 (MAFAPKTSSSSSLSSALQAAQSPPLLLRRMSSTATPRRRYDAAVVVTTTTTAR), are a transit peptide targeting the chloroplast. Residues 8-27 (SSSSSLSSALQAAQSPPLLL) show a composition bias toward low complexity. A compositionally biased stretch (pro residues) spans 64–76 (APPQAPAPAPVPP).

This sequence belongs to the TrpA family. In terms of assembly, tetramer of two alpha and two beta chains for the tryptophan synthase activity. Homodimer of alpha chains for the indole-3-glycerol phosphate lyase activity.

The protein localises to the plastid. It localises to the chloroplast. It catalyses the reaction (1S,2R)-1-C-(indol-3-yl)glycerol 3-phosphate = indole + D-glyceraldehyde 3-phosphate. The enzyme catalyses (1S,2R)-1-C-(indol-3-yl)glycerol 3-phosphate + L-serine = D-glyceraldehyde 3-phosphate + L-tryptophan + H2O. Its pathway is secondary metabolite biosynthesis; 2,4-dihydroxy-1,4-benzoxazin-3-one biosynthesis; 2,4-dihydroxy-1,4-benzoxazin-3-one from indoleglycerol phosphate: step 1/5. The protein operates within amino-acid biosynthesis; L-tryptophan biosynthesis; L-tryptophan from chorismate: step 5/5. Functionally, the alpha subunit is responsible for the aldol cleavage of indoleglycerol phosphate to indole and glyceraldehyde 3-phosphate. In bacteria, tryptophan synthase alpha (TSA) activity is almost completely dependent on formation of an active alpha2beta2 complex with tryptophan synthase beta (TSB), and indole is usually not released during tryptophan synthesis. In maize, the TSA homolog BX1 catalyzes the formation of free indole from indole-3-glycerol phosphate, independently of TSB. The sequence is that of Indole-3-glycerol phosphate lyase, chloroplastic (BX1) from Zea mays (Maize).